The primary structure comprises 451 residues: Velvet complex subunit 2 (451 aa).

Disordered regions lie at residues 1–95 (MNTT…PRSI), 205–312 (PGQS…QTNP), and 426–451 (PIRK…DDDY). Composition is skewed to polar residues over residues 18 to 28 (TMPSLHDTTYR), 40 to 62 (MPQT…NSLP), and 205 to 217 (PGQS…SPTY). The Velvet domain occupies 92–428 (PRSITVDGRK…ATQGIKIPIR (337 aa)). Over residues 267–283 (PQQSNYYYPQPSQSIPS) the composition is skewed to low complexity. The segment covering 427–445 (IRKDGKDGPGKGGKDGSRG) has biased composition (basic and acidic residues).

This sequence belongs to the velvet family. VelB subfamily. Component of the heterotrimeric velvet complex composed of LAE1, VEL1 and VEL2; VEL1 acting as a bridging protein between LAE1 and VEL2. Forms a heterodimeric complex with VOS1; the formation of the VEL2-VOS1 complex is light-dependent.

It localises to the nucleus. The protein localises to the cytoplasm. Functionally, component of the velvet transcription factor complex that controls sexual/asexual developmental ratio in response to light, promoting sexual development in the darkness while stimulating asexual sporulation under illumination. The velvet complex acts as a global regulator for secondary metabolite gene expression. Component of the VEL2-VOS1 heterodimeric complex that plays a dual role in activating genes associated with spore maturation and repressing certain development-associated genes. The VEL2-VOS1 complex binds DNA through the DNA-binding domain of VOS1 that recognizes an 11-nucleotide consensus sequence 5'-CTGGCCGCGGC-3' consisting of two motifs in the promoters of key developmental regulatory genes. Controls the expression of the oxalic acid and melanin gene clusters. Involved in the resistance to oxidative stress. Required for full virulence. The sequence is that of Velvet complex subunit 2 from Botryotinia fuckeliana (strain B05.10) (Noble rot fungus).